Consider the following 560-residue polypeptide: DNA ligase B (560 aa).

Catalysis depends on Lys124, which acts as the N6-AMP-lysine intermediate.

This sequence belongs to the NAD-dependent DNA ligase family. LigB subfamily.

The enzyme catalyses NAD(+) + (deoxyribonucleotide)n-3'-hydroxyl + 5'-phospho-(deoxyribonucleotide)m = (deoxyribonucleotide)n+m + AMP + beta-nicotinamide D-nucleotide.. Its function is as follows. Catalyzes the formation of phosphodiester linkages between 5'-phosphoryl and 3'-hydroxyl groups in double-stranded DNA using NAD as a coenzyme and as the energy source for the reaction. The sequence is that of DNA ligase B from Shigella flexneri.